A 517-amino-acid polypeptide reads, in one-letter code: Splicing factor cactin (517 aa).

Positions 1–14 (MAFRDSTRDFNRSR) are enriched in basic and acidic residues. A disordered region spans residues 1-59 (MAFRDSTRDFNRSRPEKRHASRSSSPRSFRPSNQNARANYNLPRVRDAMKEEERSRETK). The span at 22–32 (RSSSPRSFRPS) shows a compositional bias: low complexity. A compositionally biased stretch (basic and acidic residues) spans 44–59 (RVRDAMKEEERSRETK).

Belongs to the CACTIN family. In terms of assembly, interacts with sde2. Interacts with cdc5.

Plays a role in pre-mRNA splicing by facilitating excision of introns featuring long spacing between the branchpoint and 3'-splice site (ss). Recruited to the spliceosome by sde2, which may enable folding of the RNA between the BP and 3'-ss to guide the splice site towards the spliceosome's catalytic center. Assists the splicing of several components involved in chromatin organization. The protein is Splicing factor cactin of Schizosaccharomyces pombe (strain 972 / ATCC 24843) (Fission yeast).